A 468-amino-acid polypeptide reads, in one-letter code: Serine--tRNA ligase (468 aa).

272–274 (TAE) contacts L-serine. 303 to 305 (RAE) contributes to the ATP binding site. Glu326 is an L-serine binding site. 390–393 (EISS) lines the ATP pocket. Ser426 provides a ligand contact to L-serine.

It belongs to the class-II aminoacyl-tRNA synthetase family. Type-1 seryl-tRNA synthetase subfamily. As to quaternary structure, homodimer. The tRNA molecule binds across the dimer.

The protein resides in the cytoplasm. It carries out the reaction tRNA(Ser) + L-serine + ATP = L-seryl-tRNA(Ser) + AMP + diphosphate + H(+). The catalysed reaction is tRNA(Sec) + L-serine + ATP = L-seryl-tRNA(Sec) + AMP + diphosphate + H(+). Its pathway is aminoacyl-tRNA biosynthesis; selenocysteinyl-tRNA(Sec) biosynthesis; L-seryl-tRNA(Sec) from L-serine and tRNA(Sec): step 1/1. In terms of biological role, catalyzes the attachment of serine to tRNA(Ser). Is also able to aminoacylate tRNA(Sec) with serine, to form the misacylated tRNA L-seryl-tRNA(Sec), which will be further converted into selenocysteinyl-tRNA(Sec). In Xanthobacter autotrophicus (strain ATCC BAA-1158 / Py2), this protein is Serine--tRNA ligase.